Consider the following 463-residue polypeptide: MSWNQYPGGGHHQQGGYGYRPPPPQWAQQGPPPPPNMGYRPPPPPQAYYNNPPPPQQYQRPAPQQNGYQQGGYQQQQQSQGNYRTSNGGYVPPTGAPVEASYHHTGAGYTPPSGTPQRTSAPYGAGAPIRPPSQAQHYGPQLQGQGGQSAQPYFQYSQCTGKKKALCIGINYVGSSSALAGCINDAHNVQKFLIERYGYKSEDIVMLTDDARNPRQIPTRANILAAMHWLVQGAQPNDSLFFHYSGHGGQTPDLDGDEDDGYDEVIYPLDFKTAGHIVDDDITDCKGRHNIMVRPLPAGCRLTAIYDSCHSGTALDLPYIYSTEGVIKEPNLLAEAGQGLLSAGMSYLRGDTGGMLQGIMGIGKKVMNQNSGAMEKARQTKTSPADVISWSGCKDSQTSADTQEAGRATGAMSYAFIAALTKYPQQSYVQLLNTIRDELKGKYDQKPQLSASHPMDTNILFIC.

The interval 1-149 (MSWNQYPGGG…PQLQGQGGQS (149 aa)) is disordered. Over residues 7–18 (PGGGHHQQGGYG) the composition is skewed to gly residues. Residues 20 to 56 (RPPPPQWAQQGPPPPPNMGYRPPPPPQAYYNNPPPPQ) are compositionally biased toward pro residues. The span at 57 to 83 (QYQRPAPQQNGYQQGGYQQQQQSQGNY) shows a compositional bias: low complexity. Catalysis depends on residues His247 and Cys309.

The protein belongs to the peptidase C14B family.

Involved in cell death (apoptosis). In Cryptococcus neoformans var. neoformans serotype D (strain B-3501A) (Filobasidiella neoformans), this protein is Metacaspase-1 (MCA1).